A 252-amino-acid chain; its full sequence is MKTVTVKNLIIGEGMPKIIVSLMGRDINSVKAEALAYREATFDILEWRVDHFMDIASTQSVLTAARVIRDAMPDIPLLFTFRSAKEGGEQTITTQHYLTLNRAAIDSGLVDMIDLELFTGDADVKATVDYAHAHNVYVVMSNHDFHQTPSAEEMVLRLRKMQALGADIPKIAVMPQSKHDVLTLLTATLEMQQHYADRPVITMSMAKEGVISRLAGEVFGSAATFGAVKQASAPGQIAVNDLRSVLMILHNA.

3-dehydroquinate is bound by residues Ser21, 46-48 (EWR), and Arg82. His143 (proton donor/acceptor) is an active-site residue. The active-site Schiff-base intermediate with substrate is the Lys170. Residues Arg213, Ser232, and Gln236 each coordinate 3-dehydroquinate.

The protein belongs to the type-I 3-dehydroquinase family. Dimer of dimers.

The enzyme catalyses 3-dehydroquinate = 3-dehydroshikimate + H2O. The protein operates within metabolic intermediate biosynthesis; chorismate biosynthesis; chorismate from D-erythrose 4-phosphate and phosphoenolpyruvate: step 3/7. Inhibited by (2R)-2-methyl-3-dehydroquinic acid. Involved in the third step of the chorismate pathway, which leads to the biosynthesis of aromatic amino acids. Catalyzes the cis-dehydration of 3-dehydroquinate (DHQ) and introduces the first double bond of the aromatic ring to yield 3-dehydroshikimate. The reaction involves the formation of an imine intermediate between the keto group of 3-dehydroquinate and the epsilon-amino group of Lys-170 at the active site. The polypeptide is 3-dehydroquinate dehydratase (Salmonella typhi).